Consider the following 234-residue polypeptide: Pepsin inhibitor Dit33 (234 aa).

The N-terminal stretch at 1 to 17 (MKILFCFVLLAIAALRA) is a signal peptide. A disulfide bridge links Cys135 with Cys230. Positions 200–222 (RHETSSQPSDATTISTTTQAPVE) are disordered. Positions 204-219 (SSQPSDATTISTTTQA) are enriched in polar residues.

The protein belongs to the protease inhibitor I33 family.

It localises to the secreted. Aspartyl protease inhibitor. The sequence is that of Pepsin inhibitor Dit33 (DIT33) from Dirofilaria immitis (Canine heartworm).